A 432-amino-acid polypeptide reads, in one-letter code: Gamma-glutamyl phosphate reductase (432 aa).

This sequence belongs to the gamma-glutamyl phosphate reductase family.

The protein resides in the cytoplasm. The catalysed reaction is L-glutamate 5-semialdehyde + phosphate + NADP(+) = L-glutamyl 5-phosphate + NADPH + H(+). It participates in amino-acid biosynthesis; L-proline biosynthesis; L-glutamate 5-semialdehyde from L-glutamate: step 2/2. In terms of biological role, catalyzes the NADPH-dependent reduction of L-glutamate 5-phosphate into L-glutamate 5-semialdehyde and phosphate. The product spontaneously undergoes cyclization to form 1-pyrroline-5-carboxylate. This Deinococcus radiodurans (strain ATCC 13939 / DSM 20539 / JCM 16871 / CCUG 27074 / LMG 4051 / NBRC 15346 / NCIMB 9279 / VKM B-1422 / R1) protein is Gamma-glutamyl phosphate reductase.